The primary structure comprises 629 residues: Arginyl-tRNA--protein transferase 1 (629 aa).

Disordered stretches follow at residues 274–298 (QNNS…TNEP) and 353–405 (PDES…ITKE). Residues 282–295 (TTTATTATTTTTTT) are compositionally biased toward low complexity. A compositionally biased stretch (acidic residues) spans 356–396 (SYDDYVYDGKDDDDDDDDKDEKEDDEDEDQEDDEDEDDGNN).

This sequence belongs to the R-transferase family.

It catalyses the reaction an N-terminal L-alpha-aminoacyl-[protein] + L-arginyl-tRNA(Arg) = an N-terminal L-arginyl-L-aminoacyl-[protein] + tRNA(Arg) + H(+). In terms of biological role, involved in the post-translational conjugation of arginine to the N-terminal aspartate or glutamate of a protein. This arginylation is required for degradation of the protein via the ubiquitin pathway. Does not arginylate cysteine residues. This chain is Arginyl-tRNA--protein transferase 1 (ate1), found in Dictyostelium discoideum (Social amoeba).